The primary structure comprises 292 residues: Cyclin-dependent kinase 5 (292 aa).

The Protein kinase domain occupies 4–286; the sequence is YEKLEKIGEG…AEEALQHPYF (283 aa). Residues 10-18 and Lys-33 each bind ATP; that span reads IGEGTYGTV. Phosphotyrosine; by ABL1, EPHA4 and FYN is present on Tyr-15. Position 17 is a phosphothreonine (Thr-17). Lys-56 carries the N6-acetyllysine modification. Residue Ser-72 is modified to Phosphoserine. The Proton acceptor role is filled by Asp-126. Ser-159 bears the Phosphoserine mark.

The protein belongs to the protein kinase superfamily. CMGC Ser/Thr protein kinase family. CDC2/CDKX subfamily. In terms of assembly, heterodimer composed of a catalytic subunit CDK5 and a regulatory subunit CDK5R1 (p25) and macromolecular complex composed of at least CDK5, CDK5R1 (p35) and CDK5RAP1 or CDK5RAP2 or CDK5RAP3. Only the heterodimer shows kinase activity. Under neurotoxic stress and neuronal injury conditions, p35 is cleaved by calpain to generate p25 that hyperactivates CDK5, that becomes functionally disabled and often toxic. Found in a trimolecular complex with CABLES1 and ABL1. Interacts with CABLES1 and CABLES2. Interacts with AATK and GSTP1. Binds to HDAC1 when in complex with p25. Interaction with myristoylation p35 promotes CDK5 association with membranes. Both isoforms 1 and 2 interacts with beta-catenin/CTNNB1. Interacts with delta-catenin/CTNND2 and APEX1. Interacts with P53/TP53 in neurons. Interacts with PTK2/FAK1. Interacts with EPHA4; may mediate the activation of NGEF by EPHA4. The complex p35/CDK5 interacts with CLOCK. Interacts with HTR6. In terms of processing, phosphorylation on Tyr-15 by ABL1 and FYN, and on Ser-159 by casein kinase 1 promotes kinase activity. By contrast, phosphorylation at Thr-14 inhibits activity. Phosphorylation at Ser-159 is essential for maximal catalytic activity. Expressed in hippocampal neuronal synaptic termini (at protein level). Expressed predominantly in post-mitotic neurons of the central and peripheral nervous system.

It localises to the cytoplasm. Its subcellular location is the nucleus. It is found in the cell membrane. The protein resides in the perikaryon. The protein localises to the cell projection. It localises to the lamellipodium. Its subcellular location is the growth cone. It is found in the postsynaptic density. The protein resides in the synapse. The catalysed reaction is L-seryl-[protein] + ATP = O-phospho-L-seryl-[protein] + ADP + H(+). The enzyme catalyses L-threonyl-[protein] + ATP = O-phospho-L-threonyl-[protein] + ADP + H(+). Its activity is regulated as follows. Inhibited by 2-(1-ethyl-2-hydroxyethylamino)-6-benzylamino-9-isopropylpurine (roscovitine), 1-isopropyl-4-aminobenzyl-6-ether-linked benzimidazoles, resveratrol, AT-7519 and olomoucine. Activated by CDK5R1 (p35) and CDK5R2 (p39) during the development of the nervous system; degradation of CDK5R1 (p35) and CDK5R2 (p39) by proteasome result in down regulation of kinase activity, during this process, CDK5 phosphorylates p35 and induces its ubiquitination and subsequent degradation. Kinase activity is mainly determined by the amount of p35 available and subcellular location; reversible association to plasma membrane inhibits activity. Long-term inactivation as well as CDK5R1 (p25)-mediated hyperactivation of CDK5 triggers cell death. The pro-death activity of hyperactivated CDK5 is suppressed by membrane association of CDK5, via myristoylation of p35. Brain-derived neurotrophic factor, glial-derived neurotrophic factor, nerve growth factor (NGF), retinoic acid, laminin and neuregulin promote activity. Neurotoxicity enhances nuclear activity, thus leading to MEF2 phosphorylation and inhibition prior to apoptosis of cortical neurons. Repression by GSTP1 via p25/p35 translocation prevents neurodegeneration. Its function is as follows. Proline-directed serine/threonine-protein kinase essential for neuronal cell cycle arrest and differentiation and may be involved in apoptotic cell death in neuronal diseases by triggering abortive cell cycle re-entry. Interacts with D1 and D3-type G1 cyclins. Phosphorylates SRC, NOS3, VIM/vimentin, p35/CDK5R1, MEF2A, SIPA1L1, SH3GLB1, PXN, PAK1, MCAM/MUC18, SEPT5, SYN1, DNM1, AMPH, SYNJ1, CDK16, RAC1, RHOA, CDC42, TONEBP/NFAT5, MAPT/TAU, MAP1B, histone H1, p53/TP53, HDAC1, APEX1, PTK2/FAK1, huntingtin/HTT, ATM, MAP2, NEFH and NEFM. Regulates several neuronal development and physiological processes including neuronal survival, migration and differentiation, axonal and neurite growth, synaptogenesis, oligodendrocyte differentiation, synaptic plasticity and neurotransmission, by phosphorylating key proteins. Negatively regulates the CACNA1B/CAV2.2 -mediated Ca(2+) release probability at hippocampal neuronal soma and synaptic terminals. Activated by interaction with CDK5R1 (p35) and CDK5R2 (p39), especially in postmitotic neurons, and promotes CDK5R1 (p35) expression in an autostimulation loop. Phosphorylates many downstream substrates such as Rho and Ras family small GTPases (e.g. PAK1, RAC1, RHOA, CDC42) or microtubule-binding proteins (e.g. MAPT/TAU, MAP2, MAP1B), and modulates actin dynamics to regulate neurite growth and/or spine morphogenesis. Also phosphorylates exocytosis associated proteins such as MCAM/MUC18, SEPT5, SYN1, and CDK16/PCTAIRE1 as well as endocytosis associated proteins such as DNM1, AMPH and SYNJ1 at synaptic terminals. In the mature central nervous system (CNS), regulates neurotransmitter movements by phosphorylating substrates associated with neurotransmitter release and synapse plasticity; synaptic vesicle exocytosis, vesicles fusion with the presynaptic membrane, and endocytosis. Promotes cell survival by activating anti-apoptotic proteins BCL2 and STAT3, and negatively regulating of JNK3/MAPK10 activity. Phosphorylation of p53/TP53 in response to genotoxic and oxidative stresses enhances its stabilization by preventing ubiquitin ligase-mediated proteasomal degradation, and induces transactivation of p53/TP53 target genes, thus regulating apoptosis. Phosphorylation of p35/CDK5R1 enhances its stabilization by preventing calpain-mediated proteolysis producing p25/CDK5R1 and avoiding ubiquitin ligase-mediated proteasomal degradation. During aberrant cell-cycle activity and DNA damage, p25/CDK5 activity elicits cell-cycle activity and double-strand DNA breaks that precedes neuronal death by deregulating HDAC1. DNA damage triggered phosphorylation of huntingtin/HTT in nuclei of neurons protects neurons against polyglutamine expansion as well as DNA damage mediated toxicity. Phosphorylation of PXN reduces its interaction with PTK2/FAK1 in matrix-cell focal adhesions (MCFA) during oligodendrocytes (OLs) differentiation. Negative regulator of Wnt/beta-catenin signaling pathway. Activator of the GAIT (IFN-gamma-activated inhibitor of translation) pathway, which suppresses expression of a post-transcriptional regulon of proinflammatory genes in myeloid cells; phosphorylates the linker domain of glutamyl-prolyl tRNA synthetase (EPRS) in a IFN-gamma-dependent manner, the initial event in assembly of the GAIT complex. Phosphorylation of SH3GLB1 is required for autophagy induction in starved neurons. Phosphorylation of TONEBP/NFAT5 in response to osmotic stress mediates its rapid nuclear localization. MEF2 is inactivated by phosphorylation in nucleus in response to neurotoxin, thus leading to neuronal apoptosis. APEX1 AP-endodeoxyribonuclease is repressed by phosphorylation, resulting in accumulation of DNA damage and contributing to neuronal death. NOS3 phosphorylation down regulates NOS3-derived nitrite (NO) levels. SRC phosphorylation mediates its ubiquitin-dependent degradation and thus leads to cytoskeletal reorganization. May regulate endothelial cell migration and angiogenesis via the modulation of lamellipodia formation. Involved in dendritic spine morphogenesis by mediating the EFNA1-EPHA4 signaling. The complex p35/CDK5 participates in the regulation of the circadian clock by modulating the function of CLOCK protein: phosphorylates CLOCK at 'Thr-451' and 'Thr-461' and regulates the transcriptional activity of the CLOCK-BMAL1 heterodimer in association with altered stability and subcellular distribution. This is Cyclin-dependent kinase 5 from Rattus norvegicus (Rat).